Here is a 384-residue protein sequence, read N- to C-terminus: 1-deoxy-D-xylulose 5-phosphate reductoisomerase (384 aa).

The NADPH site is built by T10, G11, S12, I13, R37, N38, and N124. K125 serves as a coordination point for 1-deoxy-D-xylulose 5-phosphate. NADPH is bound at residue E126. Residue D150 participates in Mn(2+) binding. The 1-deoxy-D-xylulose 5-phosphate site is built by S151, E152, S176, and H199. E152 is a Mn(2+) binding site. G205 lines the NADPH pocket. Residues S212, N217, K218, and E221 each contribute to the 1-deoxy-D-xylulose 5-phosphate site. A Mn(2+)-binding site is contributed by E221.

The protein belongs to the DXR family. Mg(2+) is required as a cofactor. The cofactor is Mn(2+).

It catalyses the reaction 2-C-methyl-D-erythritol 4-phosphate + NADP(+) = 1-deoxy-D-xylulose 5-phosphate + NADPH + H(+). It participates in isoprenoid biosynthesis; isopentenyl diphosphate biosynthesis via DXP pathway; isopentenyl diphosphate from 1-deoxy-D-xylulose 5-phosphate: step 1/6. Its function is as follows. Catalyzes the NADPH-dependent rearrangement and reduction of 1-deoxy-D-xylulose-5-phosphate (DXP) to 2-C-methyl-D-erythritol 4-phosphate (MEP). In Clostridium perfringens (strain ATCC 13124 / DSM 756 / JCM 1290 / NCIMB 6125 / NCTC 8237 / Type A), this protein is 1-deoxy-D-xylulose 5-phosphate reductoisomerase.